Consider the following 226-residue polypeptide: PDGF-related-transforming protein sis (226 aa).

Positions 201-215 (RRPPKGKHRKCKHTH) are enriched in basic residues. Residues 201-226 (RRPPKGKHRKCKHTHDKTALKETLGA) form a disordered region.

The protein belongs to the PDGF/VEGF growth factor family.

The protein is PDGF-related-transforming protein sis (V-SIS) of Woolly monkey sarcoma virus (WMSV).